The sequence spans 322 residues: Ferredoxin--NADP reductase (322 aa).

FAD-binding residues include serine 14, aspartate 33, glutamine 41, tyrosine 46, alanine 86, phenylalanine 120, aspartate 278, and serine 319.

The protein belongs to the ferredoxin--NADP reductase type 2 family. Homodimer. Requires FAD as cofactor.

It catalyses the reaction 2 reduced [2Fe-2S]-[ferredoxin] + NADP(+) + H(+) = 2 oxidized [2Fe-2S]-[ferredoxin] + NADPH. The chain is Ferredoxin--NADP reductase from Salinispora arenicola (strain CNS-205).